We begin with the raw amino-acid sequence, 310 residues long: Ribonuclease HIII (310 aa).

The region spanning 90–306 (FQCIGSDEAG…RKKAENLVQK (217 aa)) is the RNase H type-2 domain. A divalent metal cation contacts are provided by aspartate 96, glutamate 97, and aspartate 201.

Belongs to the RNase HII family. RnhC subfamily. Requires Mn(2+) as cofactor. The cofactor is Mg(2+).

It is found in the cytoplasm. The catalysed reaction is Endonucleolytic cleavage to 5'-phosphomonoester.. Its function is as follows. Endonuclease that specifically degrades the RNA of RNA-DNA hybrids. The sequence is that of Ribonuclease HIII from Staphylococcus saprophyticus subsp. saprophyticus (strain ATCC 15305 / DSM 20229 / NCIMB 8711 / NCTC 7292 / S-41).